Here is a 118-residue protein sequence, read N- to C-terminus: Large ribosomal subunit protein bL20 (118 aa).

It belongs to the bacterial ribosomal protein bL20 family.

Its function is as follows. Binds directly to 23S ribosomal RNA and is necessary for the in vitro assembly process of the 50S ribosomal subunit. It is not involved in the protein synthesizing functions of that subunit. This is Large ribosomal subunit protein bL20 from Lactobacillus acidophilus (strain ATCC 700396 / NCK56 / N2 / NCFM).